Here is a 232-residue protein sequence, read N- to C-terminus: RNA chaperone ProQ (232 aa).

Positions 105–182 (EAKARVQAQR…REEQHTPVSD (78 aa)) are disordered. The span at 117–136 (QQAKKREAAAAAGEKEDAPR) shows a compositional bias: basic and acidic residues. The span at 137 to 146 (RERKPRPTTP) shows a compositional bias: basic residues. Over residues 147–177 (RRKEGAERKPRAQKSVEKAPKTVKAPREEQH) the composition is skewed to basic and acidic residues.

This sequence belongs to the ProQ family.

Its subcellular location is the cytoplasm. Its function is as follows. RNA chaperone with significant RNA binding, RNA strand exchange and RNA duplexing activities. May regulate ProP activity through an RNA-based, post-transcriptional mechanism. The protein is RNA chaperone ProQ of Escherichia coli O7:K1 (strain IAI39 / ExPEC).